An 88-amino-acid chain; its full sequence is Large ribosomal subunit protein bL27 (88 aa).

Positions 1–21 (MAHKKGASSSRNGRDSAAQRL) are disordered.

It belongs to the bacterial ribosomal protein bL27 family.

This chain is Large ribosomal subunit protein bL27, found in Mycobacterium marinum (strain ATCC BAA-535 / M).